The following is a 1166-amino-acid chain: ATP-dependent helicase/deoxyribonuclease subunit B (1166 aa).

One can recognise a UvrD-like helicase ATP-binding domain in the interval 1–278 (MGAEFLVGRS…LNLDITYKEL (278 aa)). ATP contacts are provided by Ser10, Gly11, Lys14, Thr15, Lys16, Thr236, and Arg283. The UvrD-like helicase C-terminal domain maps to 281–586 (TERHTKTPEL…TFSLIPPALD (306 aa)). Residues Cys801, Cys1121, Cys1124, and Cys1130 each coordinate [4Fe-4S] cluster.

This sequence belongs to the helicase family. AddB/RexB type 1 subfamily. In terms of assembly, heterodimer of AddA and AddB. At low magnesium concentrations there is no nuclease activity, but helicase activity is unaffected. is required as a cofactor. The cofactor is Mg(2+). Requires [4Fe-4S] cluster as cofactor.

In terms of biological role, the heterodimer acts both as a highly processive, ATP-dependent DNA helicase and as an ATP-dependent single-stranded exonuclease, acting in both directions. Recognizes the B.subtilis Chi site (5'-AGCGG-3') which transforms the enzyme from a helicase which degrades both DNA strands to one with only 5' to 3' exonuclease activity. This generates a double-stranded DNA with a protruding 3'-terminated single-stranded tail suitable for the initiation of homologous recombination (Chi fragment). The AddB nuclease domain is not required for Chi fragment generation but for recognition of the Chi site; this subunit has 5' -&gt; 3' nuclease activity but no helicase activity. The helicase activity of isolated AddA acts on 3'-tailed substrate and requires AddB to bind to blunt-ended DNA. RecA thread formation during DNA double-strand break repair requires RecJ or AddAB. The sequence is that of ATP-dependent helicase/deoxyribonuclease subunit B from Bacillus subtilis (strain 168).